Consider the following 308-residue polypeptide: uncharacterized protein (308 aa).

The N-terminal stretch at 1–19 (MKLLLILILIINNYNLCLS) is a signal peptide. Asn25 and Asn300 each carry an N-linked (GlcNAc...) asparagine glycan.

It localises to the secreted. This is an uncharacterized protein from Dictyostelium discoideum (Social amoeba).